The sequence spans 303 residues: MYYGFDIGGTKIALGVFDSGRQLQWEKRVPTPRDSYDAFLDAVCELVAEADQRFGCKGSVGIGIPGMPETEDGTLYAANVPAASGKPLRADLSARLDRDVRLDNDANCFALSEAWDDEFTQYPLVMGLILGTGVGGGLIFNGKPITGKSYITGEFGHMRLPVDALTMMGLDFPLRRCGCGQHGCIENYLSGRGFAWLYQHYYHQPLQAPEIIALYDQGDEQARAHVERYLDLLAVCLGNILTIVDPDLVVIGGGLSNFPAITAQLADRLPRHLLPVARVPRIERARHGDAGGMRGAAFLHLTD.

Residues 4 to 11 and 133 to 140 contribute to the ATP site; these read GFDIGGTK and GVGGGLIF. Residues His-157, Cys-177, Cys-179, and Cys-184 each contribute to the Zn(2+) site.

Belongs to the ROK (NagC/XylR) family. NagK subfamily.

The enzyme catalyses N-acetyl-D-glucosamine + ATP = N-acetyl-D-glucosamine 6-phosphate + ADP + H(+). It participates in cell wall biogenesis; peptidoglycan recycling. Catalyzes the phosphorylation of N-acetyl-D-glucosamine (GlcNAc) derived from cell-wall degradation, yielding GlcNAc-6-P. This Escherichia coli O9:H4 (strain HS) protein is N-acetyl-D-glucosamine kinase.